The following is a 1036-amino-acid chain: Isoleucine--tRNA ligase (1036 aa).

The 'HIGH' region motif lies at 46–56; the sequence is PFATGLPHYGH. The 'KMSKS' region motif lies at 589-593; that stretch reads KMSKR. Lys-592 contacts ATP.

Belongs to the class-I aminoacyl-tRNA synthetase family. IleS type 2 subfamily. As to quaternary structure, monomer. The cofactor is Zn(2+).

It localises to the cytoplasm. It catalyses the reaction tRNA(Ile) + L-isoleucine + ATP = L-isoleucyl-tRNA(Ile) + AMP + diphosphate. In terms of biological role, catalyzes the attachment of isoleucine to tRNA(Ile). As IleRS can inadvertently accommodate and process structurally similar amino acids such as valine, to avoid such errors it has two additional distinct tRNA(Ile)-dependent editing activities. One activity is designated as 'pretransfer' editing and involves the hydrolysis of activated Val-AMP. The other activity is designated 'posttransfer' editing and involves deacylation of mischarged Val-tRNA(Ile). This Chlamydia trachomatis serovar L2 (strain ATCC VR-902B / DSM 19102 / 434/Bu) protein is Isoleucine--tRNA ligase.